We begin with the raw amino-acid sequence, 332 residues long: Protein phosphatase PTC7 homolog fig (332 aa).

The PPM-type phosphatase domain maps to 70–325 (KPCSPRERAN…DDITLILASV (256 aa)). Residues Asp102, Gly103, and Asp247 each contribute to the Mn(2+) site.

This sequence belongs to the PP2C family. The cofactor is Mg(2+). Mn(2+) is required as a cofactor.

It carries out the reaction O-phospho-L-seryl-[protein] + H2O = L-seryl-[protein] + phosphate. The catalysed reaction is O-phospho-L-threonyl-[protein] + H2O = L-threonyl-[protein] + phosphate. This is Protein phosphatase PTC7 homolog fig from Drosophila ananassae (Fruit fly).